The chain runs to 334 residues: Glyceraldehyde-3-phosphate dehydrogenase (334 aa).

Residues 12–13 and Gly-111 each bind NAD(+); that span reads TI. 140-142 is a D-glyceraldehyde 3-phosphate binding site; it reads SCN. The active-site Nucleophile is Cys-141. Residue Arg-167 coordinates NAD(+). A D-glyceraldehyde 3-phosphate-binding site is contributed by 192 to 193; that stretch reads HG. Position 298 (Gln-298) interacts with NAD(+).

The protein belongs to the glyceraldehyde-3-phosphate dehydrogenase family. Homotetramer.

Its subcellular location is the cytoplasm. The enzyme catalyses D-glyceraldehyde 3-phosphate + phosphate + NADP(+) = (2R)-3-phospho-glyceroyl phosphate + NADPH + H(+). It catalyses the reaction D-glyceraldehyde 3-phosphate + phosphate + NAD(+) = (2R)-3-phospho-glyceroyl phosphate + NADH + H(+). The protein operates within carbohydrate degradation; glycolysis; pyruvate from D-glyceraldehyde 3-phosphate: step 1/5. The chain is Glyceraldehyde-3-phosphate dehydrogenase from Thermococcus onnurineus (strain NA1).